Here is a 141-residue protein sequence, read N- to C-terminus: Putative 8-oxo-dGTP diphosphatase 2 (141 aa).

Positions 2 to 131 (LNQIVVAGAI…WIADLARTLN (130 aa)) constitute a Nudix hydrolase domain. Mg(2+) is bound by residues G37, E52, E55, and E56. The Nudix box signature appears at 37 to 58 (GKVAAGETERAALARELAEELG).

Belongs to the Nudix hydrolase family. It depends on Mg(2+) as a cofactor. Mn(2+) is required as a cofactor.

It carries out the reaction 8-oxo-dGTP + H2O = 8-oxo-dGMP + diphosphate + H(+). Its function is as follows. May be involved in the GO system responsible for removing an oxidatively damaged form of guanine (7,8-dihydro-8-oxoguanine, 8-oxo-dGTP) from DNA and the nucleotide pool. 8-oxo-dGTP is inserted opposite dA and dC residues of template DNA with almost equal efficiency thus leading to A.T to G.C transversions. MutT specifically degrades 8-oxo-dGTP to the monophosphate. The sequence is that of Putative 8-oxo-dGTP diphosphatase 2 (mutT2) from Mycobacterium tuberculosis (strain CDC 1551 / Oshkosh).